A 913-amino-acid polypeptide reads, in one-letter code: Tyrosine-protein phosphatase non-receptor type 3 (913 aa).

Residues 29 to 312 (VICSIRFLDG…EHHSFFQAKK (284 aa)) form the FERM domain. 3 positions are modified to phosphoserine: serine 357, serine 359, and serine 367. Disordered regions lie at residues 364 to 400 (ETKS…DNLA) and 417 to 473 (KGPL…PDGV). Phosphothreonine is present on threonine 376. Serine 381 carries the post-translational modification Phosphoserine. Residues 382–393 (PRLRHEIRKPRH) show a composition bias toward basic residues. The residue at position 425 (serine 425) is a Phosphoserine. Positions 441-453 (SENNPAQSCLTQK) are enriched in polar residues. Low complexity predominate over residues 454 to 470 (SSSSVSPSSNAPGSCSP). Residues 510-582 (LIRITPDEEG…DQVVMFIKAS (73 aa)) form the PDZ domain. One can recognise a Tyrosine-protein phosphatase domain in the interval 646–901 (VLIQFEQLYR…KFVCEAILRV (256 aa)). Residues aspartate 811, 842-848 (CSAGIGR), and glutamine 886 contribute to the substrate site. The Phosphocysteine intermediate role is filled by cysteine 842.

Belongs to the protein-tyrosine phosphatase family. Non-receptor class subfamily.

It localises to the cell membrane. Its subcellular location is the cytoplasm. It is found in the cytoskeleton. It catalyses the reaction O-phospho-L-tyrosyl-[protein] + H2O = L-tyrosyl-[protein] + phosphate. Functionally, may act at junctions between the membrane and the cytoskeleton. The sequence is that of Tyrosine-protein phosphatase non-receptor type 3 (Ptpn3) from Mus musculus (Mouse).